Here is a 161-residue protein sequence, read N- to C-terminus: Globin CTT-VIIB-3 (161 aa).

Residues 1–16 (MKFFAVLALCIVGAIA) form the signal peptide. In terms of domain architecture, Globin spans 18–161 (PLTADEASLV…NTYAIVVPRL (144 aa)). Heme b-binding residues include His76 and His111.

The protein belongs to the globin family. As to quaternary structure, homodimer.

This chain is Globin CTT-VIIB-3 (CTT-7B3), found in Chironomus thummi thummi (Midge).